A 252-amino-acid chain; its full sequence is Phosphatidylserine decarboxylase proenzyme (252 aa).

The Schiff-base intermediate with substrate; via pyruvic acid role is filled by S211. Residue S211 is modified to Pyruvic acid (Ser); by autocatalysis.

The protein belongs to the phosphatidylserine decarboxylase family. PSD-A subfamily. Heterodimer of a large membrane-associated beta subunit and a small pyruvoyl-containing alpha subunit. Requires pyruvate as cofactor. Post-translationally, is synthesized initially as an inactive proenzyme. Formation of the active enzyme involves a self-maturation process in which the active site pyruvoyl group is generated from an internal serine residue via an autocatalytic post-translational modification. Two non-identical subunits are generated from the proenzyme in this reaction, and the pyruvate is formed at the N-terminus of the alpha chain, which is derived from the carboxyl end of the proenzyme. The post-translation cleavage follows an unusual pathway, termed non-hydrolytic serinolysis, in which the side chain hydroxyl group of the serine supplies its oxygen atom to form the C-terminus of the beta chain, while the remainder of the serine residue undergoes an oxidative deamination to produce ammonia and the pyruvoyl prosthetic group on the alpha chain.

It localises to the cell membrane. The enzyme catalyses a 1,2-diacyl-sn-glycero-3-phospho-L-serine + H(+) = a 1,2-diacyl-sn-glycero-3-phosphoethanolamine + CO2. It functions in the pathway phospholipid metabolism; phosphatidylethanolamine biosynthesis; phosphatidylethanolamine from CDP-diacylglycerol: step 2/2. In terms of biological role, catalyzes the formation of phosphatidylethanolamine (PtdEtn) from phosphatidylserine (PtdSer). In Novosphingobium aromaticivorans (strain ATCC 700278 / DSM 12444 / CCUG 56034 / CIP 105152 / NBRC 16084 / F199), this protein is Phosphatidylserine decarboxylase proenzyme.